Consider the following 285-residue polypeptide: Integrin alpha-1 (285 aa).

The Extracellular portion of the chain corresponds to Glu1 to Gly285. N-linked (GlcNAc...) asparagine glycosylation is found at Asn2, Asn40, Asn208, and Asn232. Residues Ile66–Gln279 enclose the VWFA domain.

Belongs to the integrin alpha chain family. Heterodimer of an alpha and a beta subunit. Alpha-1 associates with beta-1.

The protein localises to the membrane. Functionally, integrin alpha-1/beta-1 is a receptor for laminin and collagen. It recognizes the proline-hydroxylated sequence G-F-P-G-E-R in collagen. Involved in anchorage-dependent, negative regulation of EGF-stimulated cell growth. The chain is Integrin alpha-1 (ITGA1) from Gallus gallus (Chicken).